The following is a 415-amino-acid chain: Serine hydroxymethyltransferase (415 aa).

Residues L117 and 121–123 (GHL) each bind (6S)-5,6,7,8-tetrahydrofolate. N6-(pyridoxal phosphate)lysine is present on K226.

This sequence belongs to the SHMT family. As to quaternary structure, homodimer. Requires pyridoxal 5'-phosphate as cofactor.

The protein resides in the cytoplasm. The catalysed reaction is (6R)-5,10-methylene-5,6,7,8-tetrahydrofolate + glycine + H2O = (6S)-5,6,7,8-tetrahydrofolate + L-serine. It functions in the pathway one-carbon metabolism; tetrahydrofolate interconversion. Its pathway is amino-acid biosynthesis; glycine biosynthesis; glycine from L-serine: step 1/1. In terms of biological role, catalyzes the reversible interconversion of serine and glycine with tetrahydrofolate (THF) serving as the one-carbon carrier. This reaction serves as the major source of one-carbon groups required for the biosynthesis of purines, thymidylate, methionine, and other important biomolecules. Also exhibits THF-independent aldolase activity toward beta-hydroxyamino acids, producing glycine and aldehydes, via a retro-aldol mechanism. In Leptospira interrogans serogroup Icterohaemorrhagiae serovar copenhageni (strain Fiocruz L1-130), this protein is Serine hydroxymethyltransferase.